The primary structure comprises 570 residues: Interleukin-1 receptor accessory protein (570 aa).

Residues 1 to 20 (MGLPWCLMSLFFCGILQSHA) form the signal peptide. 3 Ig-like C2-type domains span residues 21–128 (SERC…VAFP), 141–230 (PMRL…RTMT), and 243–348 (PHIY…AKVK). Topologically, residues 21–367 (SERCDDWGLD…VELACGFGAT (347 aa)) are extracellular. Disulfide bonds link cysteine 24/cysteine 122, cysteine 47/cysteine 114, cysteine 137/cysteine 181, cysteine 160/cysteine 212, and cysteine 266/cysteine 332. Asparagine 57 is a glycosylation site (N-linked (GlcNAc...) asparagine). Positions 69 to 85 (IWYWTRQDRDLEEPINF) are essential for interaction with PTPRD. Residues asparagine 107, asparagine 111, asparagine 118, asparagine 157, asparagine 196, and asparagine 209 are each glycosylated (N-linked (GlcNAc...) asparagine). A helical transmembrane segment spans residues 368 to 388 (VFLVVVLIVVYHVYWLEMVLF). The Cytoplasmic segment spans residues 389 to 570 (YRAHFGTDET…GLSYSSLKNV (182 aa)). The region spanning 403–546 (KEYDIYVSYA…RFWKQLQVAM (144 aa)) is the TIR domain. Glutamate 482 is an active-site residue. The disordered stretch occupies residues 550-570 (KSPRWSSSDKQGLSYSSLKNV). A compositionally biased stretch (polar residues) spans 553-570 (RWSSSDKQGLSYSSLKNV). At serine 557 the chain carries Phosphoserine.

It belongs to the interleukin-1 receptor family. The interleukin-36 receptor complex is a heterodimer of IL1RL2 and IL1RAP; the association is inhibited by IL36RN. The interleukin-1 receptor complex is a heterodimer of IL1R1 and IL1RAP. Associates with IL1R2 to form a non-signaling interleukin-1 receptor complex. Interacts with IL-33-bound IL1RL1 to form the minimal interleukin-33 signaling complex with a 1:1:1 stoichiometry. Interacts with KIT (independently of stimulation with KITLG/SCF). A mast cell-specific KITLG/SCF-induced interleukin-33 signaling complex contains IL1RL1, IL1RAP, KIT and MYD88. Interacts (via the first immunoglobilin domain) with PTPRD (via the third immunoglobilin domain); induces pre- and postsynaptic differentiation of neurons. In terms of tissue distribution, highly expressed in hypothalamus, in the dentate gyrus of hippocampus, cerebral cortex, cerebellum, liver and lung.

It is found in the membrane. It carries out the reaction NAD(+) + H2O = ADP-D-ribose + nicotinamide + H(+). Coreceptor for IL1RL2 in the IL-36 signaling system. Coreceptor with IL1R1 in the IL-1 signaling system. Associates with IL1R1 bound to IL1B to form the high affinity interleukin-1 receptor complex which mediates interleukin-1-dependent activation of NF-kappa-B and other pathways. Signaling involves the recruitment of adapter molecules such as TOLLIP, MYD88, and IRAK1 or IRAK2 via the respective TIR domains of the receptor/coreceptor subunits. Recruits TOLLIP to the signaling complex. Does not bind to interleukin-1 alone; binding of IL1RN to IL1R1, prevents its association with IL1R1 to form a signaling complex. The cellular response is modulated through a non-signaling association with the membrane IL1R2 decoy receptor. Coreceptor for IL1RL1 in the IL-33 signaling system. Can bidirectionally induce pre- and postsynaptic differentiation of neurons by trans-synaptically binding to PTPRD. May play a role in IL1B-mediated costimulation of IFNG production from T-helper 1 (Th1) cells. This chain is Interleukin-1 receptor accessory protein (Il1rap), found in Rattus norvegicus (Rat).